The following is a 212-amino-acid chain: MRIKICGITQPDQGRAIATCGATALGFILVPSSPRYVKIEQINAITAAIPDKIDFIGVFADEQPEIIQQIIVKTPLTSVQLHGKESPEYCQRLRQLLPDREIIKALRIKDRESWEKSAIYFNSVDTLLLDAYHPQLLGGTGHTLDWQALASFSPPLPWFLAGGLNPDNISEALTRLHPQGIDVSSGVERSPGDKDLKKVALLLERLQKFRDQ.

The protein belongs to the TrpF family.

It catalyses the reaction N-(5-phospho-beta-D-ribosyl)anthranilate = 1-(2-carboxyphenylamino)-1-deoxy-D-ribulose 5-phosphate. It functions in the pathway amino-acid biosynthesis; L-tryptophan biosynthesis; L-tryptophan from chorismate: step 3/5. This chain is N-(5'-phosphoribosyl)anthranilate isomerase, found in Microcystis aeruginosa (strain NIES-843 / IAM M-2473).